Reading from the N-terminus, the 106-residue chain is Gas vesicle protein J (106 aa).

This sequence belongs to the gas vesicle GvpA family.

It localises to the gas vesicle. Functionally, a minor component of the gas vesicle, might be involved in nucleating gas vesicle formation. Gas vesicles are hollow, gas filled proteinaceous nanostructures found in some microorganisms. It is not clear what function gas vesicles perform in soil bacteria. This is Gas vesicle protein J from Streptomyces sp. (strain CB03234).